The chain runs to 130 residues: Small ribosomal subunit protein uS11 (130 aa).

It belongs to the universal ribosomal protein uS11 family. As to quaternary structure, part of the 30S ribosomal subunit. Interacts with proteins S7 and S18. Binds to IF-3.

In terms of biological role, located on the platform of the 30S subunit, it bridges several disparate RNA helices of the 16S rRNA. Forms part of the Shine-Dalgarno cleft in the 70S ribosome. The polypeptide is Small ribosomal subunit protein uS11 (Synechococcus sp. (strain CC9605)).